The primary structure comprises 360 residues: MERLKVELGERSYPIEIAAGLLQHAEVLTQTIKGKRVMIVTNTVVAPLYLERIVQLLSGYQVEHLILPDGEAYKTLATFERIMSALLETNHGRDTTLIALGGGVIGDVVGFAAASYQRGIPFIQVPTTLLSQVDSSVGGKTAVNHPLGKNMIGAFYQPRHVVIDTECLQTLPAREFAAGMAEVIKYGIIWDVEFFCWLEANMSRLQAQEPAALAYAIRRCCEIKADVVGQDETEHGVRALLNLGHTFGHAIEAEKGYGNWLHGEAVAAGTMLAANTALARGDVTEQQVDRIRALLLAANLPVTAPPEMDFAAFIRHMRRDKKVLEGKLRLVLPVGIGHAQVVADVSDAELLAVIESGRDE.

NAD(+) contacts are provided by residues 69–74, 103–107, 127–128, Lys-140, Lys-149, and 167–170; these read DGEAYK, GVIGD, TT, and CLQT. Zn(2+)-binding residues include Glu-182, His-245, and His-262.

Belongs to the sugar phosphate cyclases superfamily. Dehydroquinate synthase family. The cofactor is Co(2+). Zn(2+) is required as a cofactor. Requires NAD(+) as cofactor.

It is found in the cytoplasm. It carries out the reaction 7-phospho-2-dehydro-3-deoxy-D-arabino-heptonate = 3-dehydroquinate + phosphate. It functions in the pathway metabolic intermediate biosynthesis; chorismate biosynthesis; chorismate from D-erythrose 4-phosphate and phosphoenolpyruvate: step 2/7. In terms of biological role, catalyzes the conversion of 3-deoxy-D-arabino-heptulosonate 7-phosphate (DAHP) to dehydroquinate (DHQ). This is 3-dehydroquinate synthase from Aeromonas hydrophila subsp. hydrophila (strain ATCC 7966 / DSM 30187 / BCRC 13018 / CCUG 14551 / JCM 1027 / KCTC 2358 / NCIMB 9240 / NCTC 8049).